The chain runs to 87 residues: Defensin-like protein 218 (87 aa).

Residues 1-19 (MKTIVCFLTILILVSSCES) form the signal peptide. Intrachain disulfides connect Cys51-Cys70, Cys54-Cys75, and Cys58-Cys77.

It belongs to the DEFL family.

The protein resides in the secreted. This chain is Defensin-like protein 218, found in Arabidopsis thaliana (Mouse-ear cress).